The chain runs to 354 residues: Envelope protein US28 (354 aa).

Residues methionine 1–leucine 37 are Extracellular-facing. An N-linked (GlcNAc...) asparagine; by host glycan is attached at asparagine 30. Residues phenylalanine 38–isoleucine 58 form a helical membrane-spanning segment. The Cytoplasmic segment spans residues threonine 59–aspartate 69. A helical membrane pass occupies residues valine 70–methionine 90. Residues glutamine 91–serine 101 are Extracellular-facing. A helical membrane pass occupies residues valine 102–isoleucine 122. The Cytoplasmic segment spans residues threonine 123–cysteine 145. The chain crosses the membrane as a helical span at residues leucine 146–valine 166. The Extracellular portion of the chain corresponds to threonine 167 to serine 183. Residues tyrosine 184–isoleucine 204 form a helical membrane-spanning segment. Residues serine 205–arginine 228 are Cytoplasmic-facing. The helical transmembrane segment at valine 229 to phenylalanine 249 threads the bilayer. Residues valine 250–leucine 273 lie on the Extracellular side of the membrane. The helical transmembrane segment at isoleucine 274 to valine 294 threads the bilayer. Over glycine 295–proline 354 the chain is Cytoplasmic.

Belongs to the G-protein coupled receptor 1 family. As to quaternary structure, interacts with host GPRASP1; this interaction targets US28 to lysosomes for degradation. Interacts with host CX3CL1/Fractalkine (via N-terminus). In terms of processing, phosphorylated. High phosphorylation occurs concomitantly with receptor endocytosis and correlate with low receptor presence at the plasma membrane.

The protein localises to the host cell membrane. Its function is as follows. Receptor for a C-C type chemokine. Binds to a great number of different CC-chemokines including CCL5/RANTES, CCL2/MCP-1, CCL3/MIP-1-alpha as well as CX3CL1/Fractalkine. Transduces signals resulting in the activation of MAP kinase signaling pathways and augmentation of intracellular calcium ion levels, leading to alterations in chemotactic behavior of vascular smooth muscle cells and macrophages. The US28 receptor also exhibits high levels of agonist-independent signaling activity and agonist-independent endocytosis. Interacts with the host Gi complex without activating it, thereby probably interfering with the chemokine-Gi signaling. May also function as a G protein sink to sequester G protein from the cell surface via internalization. Interacts with endogenous Gaq/11 subunits and thereby constitutively activates phospholipase C. This Human cytomegalovirus (strain Merlin) (HHV-5) protein is Envelope protein US28 (US28).